Consider the following 468-residue polypeptide: MRFPAASVAVDSTPQLRLLQMKDSHETYSTVQLVHSPLPEKGPNSVLVDVPQQISRRKPTAEQSFVSGSDSSRSSTKSSSGSRPVMTTTADPNIVTAASTESVSSSPKWLPKKADTDDRVQRSRERNRIHARKTRQRKKEQMQSLEGRATDLKHEQIRLKQIINEKNTANILVGLFSKGQSQSPNEDPRVEALMYRSVEEIPDPSKIPELPALILPGQHASKKIKVAVPVVAASPQSMSDGGGEEVASTSDVSGDEQQVPDDGIDYDLLGKDRSKCTPEELDQIRRERNRMHAKRTRDRKRIFTEEMAEMCRILEEENHLLRVHLGGLDSDFKSESTTTSTHVVDRIDSVLSTPTLASCAPPQDMVSVSLSPSQLPSKPSTKEVAFNQLQTLLDVAGSFERQQREAERKVPQMCSISAASDTSTSDSSHHHRQRRCHKGDSDRPVKRQRYQVPRSITTTTSLAAPVGW.

2 disordered regions span residues 55–149 (SRRK…EGRA) and 234–272 (SPQSMSDGGGEEVASTSDVSGDEQQVPDDGIDYDLLGKD). Low complexity-rich tracts occupy residues 64–82 (SFVSGSDSSRSSTKSSSGS) and 95–106 (VTAASTESVSSS). The segment covering 112 to 128 (KKADTDDRVQRSRERNR) has biased composition (basic and acidic residues). The bZIP 1 domain maps to 117–165 (DDRVQRSRERNRIHARKTRQRKKEQMQSLEGRATDLKHEQIRLKQIINE). A basic motif 1 region spans residues 119–139 (RVQRSRERNRIHARKTRQRKK). Residues 129-138 (IHARKTRQRK) are compositionally biased toward basic residues. Residues 145 to 159 (LEGRATDLKHEQIRL) form a leucine-zipper 1 region. The span at 247 to 256 (ASTSDVSGDE) shows a compositional bias: polar residues. In terms of domain architecture, bZIP 2 spans 279–333 (EELDQIRRERNRMHAKRTRDRKRIFTEEMAEMCRILEEENHLLRVHLGGLDSDFK). The interval 285–312 (RRERNRMHAKRTRDRKRIFTEEMAEMCR) is basic motif 2. The leucine-zipper 2 stretch occupies residues 313–320 (ILEEENHL). Residues 400 to 468 (ERQQREAERK…TTSLAAPVGW (69 aa)) form a disordered region. A compositionally biased stretch (basic and acidic residues) spans 401-410 (RQQREAERKV). The segment covering 417–426 (SAASDTSTSD) has biased composition (low complexity).

The protein belongs to the bZIP family.

It localises to the nucleus. In terms of biological role, transcriptional activator which binds to the C-box-like motif 5'-TGACGT-3' and A-box-like motif 5'-GTACGTA-3' of target promoters to positively regulate the expression of genes involved in the tricarboxylic acid (TCA) cycle in response to nitrogen starvation. May also regulate the TCA cycle during day-to-night transitions. The chain is bZIP transcription factor 14 from Phaeodactylum tricornutum (strain CCAP 1055/1).